We begin with the raw amino-acid sequence, 501 residues long: Proline--tRNA ligase (501 aa).

The protein belongs to the class-II aminoacyl-tRNA synthetase family.

It carries out the reaction tRNA(Pro) + L-proline + ATP = L-prolyl-tRNA(Pro) + AMP + diphosphate. This Encephalitozoon cuniculi (strain GB-M1) (Microsporidian parasite) protein is Proline--tRNA ligase.